A 78-amino-acid chain; its full sequence is Protein DsvD (78 aa).

It to A.fulgidus DsrD.

May play an essential role in dissimilatory sulfite reduction. The chain is Protein DsvD (dsvD) from Nitratidesulfovibrio vulgaris (strain ATCC 29579 / DSM 644 / CCUG 34227 / NCIMB 8303 / VKM B-1760 / Hildenborough) (Desulfovibrio vulgaris).